Here is a 683-residue protein sequence, read N- to C-terminus: Protein zntD (683 aa).

The next 3 helical transmembrane spans lie at Ile12 to Met32, Leu42 to Phe62, and Pro79 to Ile99. Basic residues predominate over residues Val120 to His129. 4 disordered regions span residues Val120–Thr180, Gly299–Asn325, Cys364–Thr390, and Ile451–Asn489. The span at Gly137–Ser149 shows a compositional bias: gly residues. Composition is skewed to low complexity over residues Thr160 to Thr180 and Asn302 to Asn325. Low complexity predominate over residues Ile451–Asn465. Residues Asn466–Asn475 show a composition bias toward gly residues. Residues Ser476–Asn489 are compositionally biased toward low complexity. 5 helical membrane-spanning segments follow: residues Ile534–Ala554, Val564–Ile584, Phe600–Ile620, Pro631–Ile651, and Ile662–Trp682.

Belongs to the ZIP transporter (TC 2.A.5) family.

It is found in the membrane. May transport divalent cations. May participate, with dstA, in the regulation of the differentiation of stalk cells during development. The protein is Protein zntD (zntD) of Dictyostelium discoideum (Social amoeba).